Reading from the N-terminus, the 284-residue chain is Homeobox protein Hox-D13 (284 aa).

A DNA-binding region (homeobox) is located at residues 217 to 276; the sequence is GRKKRVPYTKTQLKELEREYATNKFITKEKRRRISTATNLTERQVTIWFQNRRVKEKKVV.

This sequence belongs to the Abd-B homeobox family.

It localises to the nucleus. Its function is as follows. Sequence-specific transcription factor that binds gene promoters and activates their transcription. Part of a developmental regulatory system that provides cells with specific positional identities on the anterior-posterior axis. This chain is Homeobox protein Hox-D13 (HOXD13), found in Heterodontus francisci (Horn shark).